Consider the following 1771-residue polypeptide: Fatty acid synthase alpha subunit pkiB (1771 aa).

The segment covering 108–130 has biased composition (polar residues); the sequence is SQPTQPQFEPTSPSHLTKRSPSP. The disordered stretch occupies residues 108–133; it reads SQPTQPQFEPTSPSHLTKRSPSPSKA. Positions 143-221 constitute a Carrier domain; that stretch reads ELTLQAGHVI…ESFQPEFSGI (79 aa). O-(pantetheine 4'-phosphoryl)serine is present on Ser-181. Positions 575 to 771 are beta-ketoacyl reductase; that stretch reads HKAVLVTGAG…CGAVIGWTRG (197 aa). One can recognise a Ketosynthase family 3 (KS3) domain in the interval 1011–1531; the sequence is KELLHEVAVE…QKGAINIMVS (521 aa). Catalysis depends on for beta-ketoacyl synthase activity residues Cys-1197, His-1416, and His-1457. Residues Asp-1650, Val-1651, and Glu-1652 each contribute to the Mg(2+) site. Acetyl-CoA is bound by residues 1650–1652, Tyr-1676, Ser-1686, 1695–1705, 1719–1722, and 1753–1755; these read DVE, EAAFKSLQTTS, EVGG, and ISH. 2 residues coordinate Mg(2+): Ser-1754 and His-1755.

The protein belongs to the thiolase-like superfamily. Fungal fatty acid synthetase subunit alpha family. [Alpha(6)beta(6)] hexamers of two multifunctional subunits (alpha and beta).

It catalyses the reaction acetyl-CoA + n malonyl-CoA + 2n NADPH + 4n H(+) = a long-chain-acyl-CoA + n CoA + n CO2 + 2n NADP(+).. The catalysed reaction is a fatty acyl-[ACP] + malonyl-[ACP] + H(+) = a 3-oxoacyl-[ACP] + holo-[ACP] + CO2. It carries out the reaction a (3R)-hydroxyacyl-[ACP] + NADP(+) = a 3-oxoacyl-[ACP] + NADPH + H(+). It functions in the pathway secondary metabolite biosynthesis. Functionally, fatty acid synthase alpha subunit; part of the pki gene cluster that mediates the biosynthesis of 2,4-dihydroxy-3-methyl-6-(2-oxoundecyl)benzaldehyde. The first step in the pathway is the generation of the decanoyl starter unit by the FAS composed of subunits pkiB and pkiC, which is then transferred directly from the FAS to the SAT domain of the non-reducing polyketide synthase pkiA. PkiA condenses the decanoyyl starter unit with 4 malonyl-CoA units and performs one methylation step to yield 2,4-dihydroxy-3-methyl-6-(2-oxoundecyl)benzaldehyde. The polypeptide is Fatty acid synthase alpha subunit pkiB (Emericella nidulans (strain FGSC A4 / ATCC 38163 / CBS 112.46 / NRRL 194 / M139) (Aspergillus nidulans)).